We begin with the raw amino-acid sequence, 363 residues long: Ly6/PLAUR domain-containing protein 3 (363 aa).

The N-terminal stretch at 1–32 (MDAARRGDTQPVMWTTGWLLLLPLLLCEGAQA) is a signal peptide. Residues 35-128 (CYSCVQKADD…LNLTLRGLNP (94 aa)) form the UPAR/Ly6 1 domain. N-linked (GlcNAc...) asparagine glycans are attached at residues Asn-120, Asn-131, Asn-178, and Asn-185. A UPAR/Ly6 2 domain is found at 142-224 (CYSCVGLSRE…GSCCQGPRCN (83 aa)). Pro residues predominate over residues 238–248 (PPLVLLPPPTT). Disordered regions lie at residues 238–287 (PPLV…TSPH) and 301–336 (LSGG…GGAQ). Positions 249-278 (AAPSTRAQNSSSTTSTAAPTTTTSIIKPTT) are enriched in low complexity. Gly residues predominate over residues 304-318 (GAAGHGGTAGHGGAA). Residues 320 to 330 (HQDRSNMEKYP) are compositionally biased toward basic and acidic residues. A lipid anchor (GPI-anchor amidated serine) is attached at Ser-343. A propeptide spans 344 to 363 (GTLGSWLSAVLLTVVAGAML) (removed in mature form).

As to quaternary structure, binds laminin-1 and laminin-5. Interacts with LGALS3. Interacts with AGR2 and AGR3.

It localises to the cell membrane. In terms of biological role, supports cell migration. May be involved in tumor progression. The protein is Ly6/PLAUR domain-containing protein 3 (Lypd3) of Mus musculus (Mouse).